Here is a 1514-residue protein sequence, read N- to C-terminus: Mitogen-activated protein kinase-binding protein 1 (1514 aa).

Position 2 is an N-acetylalanine (Ala-2). 12 WD repeats span residues 88–129 (SSRK…QVAE), 132–173 (EHKY…VVAS), 175–213 (KVSSRVTAVSFSEDCSYFVTAGNRHIKFWYLDDSKTSKV), 276–315 (DSFTTTVAHCISVSQDYIFCGCADGTVRLFNPSNLHFLST), 342–381 (ARYPDTIALTFDPTNQWLSCVYNDHSIYVWDVRDPKKVGK), 387–436 (YHSS…VHGS), 477–516 (DPRVGIRSVCVSPNGQHLASGDRMGTLRVHELQSLSEMLK), 519–561 (AHDS…SLQQ), 565–606 (EHSS…DGVQ), 614–653 (VRKTTLYDMDVEPSWKYTAIGCQDRNIRIFNISSGKQKKL), 659–698 (GEDGTLIKVQTDPSGIYIATSCSDKNLSIFDFSSGECVAT), and 701–740 (GHSEIVTGMKFSNDCKHLISVSGDSCIFVWRLSSEMTISM). 4 disordered regions span residues 748–804 (RQRQ…PALP), 880–925 (PSLQ…SQPC), 951–1256 (EDGI…SSMA), and 1299–1336 (DIPKPLPDRPTLAAFSPVTKGRAPGEAEKPGFPVGLGK). Positions 789–800 (KEGEDEGTEEEL) are enriched in acidic residues. 2 stretches are compositionally biased toward polar residues: residues 905-925 (LETSLTSQNEKPPRPQASQPC) and 961-971 (DNPTMDTSEFQ). Residues 996–1011 (DSACSVDYSSSCLSSP) are compositionally biased toward low complexity. Residues 1032 to 1048 (DLEEPAEGDEEEEEEEG) show a composition bias toward acidic residues. Residues 1113–1126 (PSPSSSSLALMSRP) show a composition bias toward low complexity. 2 stretches are compositionally biased toward polar residues: residues 1188 to 1200 (SPFSGLQKAQSVH) and 1245 to 1256 (HSYQNPTTSSMA). Ser-1198 is modified (phosphoserine).

As to quaternary structure, can form homodimers (via C-terminus). Interacts (via C-terminus) with WDR62 (via C-terminus). Interacts with MAPK9. Interacts (via N-terminus) with NOD2; the interaction is enhanced in presence of muramyl dipeptide (MDP). Interacts with MAPK10. In terms of tissue distribution, expressed in intestinal mucosa, where it is detected in epithelial cells, endothelial cells, smooth muscle cells and immune cells, such as lymphocytes. Expressed in kidney.

Its subcellular location is the cytoplasm. The protein localises to the nucleus. It is found in the cytoskeleton. The protein resides in the spindle pole. Functionally, negative regulator of NOD2 function. It down-regulates NOD2-induced processes such as activation of NF-kappa-B signaling, IL8 secretion and antibacterial response. Involved in JNK signaling pathway. In Homo sapiens (Human), this protein is Mitogen-activated protein kinase-binding protein 1 (MAPKBP1).